Consider the following 500-residue polypeptide: NAD(P)H-quinone oxidoreductase chain 4, chloroplastic (500 aa).

14 helical membrane passes run 4 to 24, 35 to 55, 87 to 107, 113 to 130, 134 to 154, 167 to 187, 211 to 231, 242 to 262, 272 to 292, 305 to 325, 330 to 350, 386 to 406, 416 to 436, and 466 to 486; these read FPWL…MLFL, YTIC…CYNF, IGTI…AFPV, LFHF…GSFS, LLLF…LLSM, FILY…GISL, IILY…IPLH, HYST…YGLV, AHSM…IYAA, IAYS…SITD, GAIL…FLAG, LALP…GIIT, ILII…LLSM, and ISSL…LALA.

The protein belongs to the complex I subunit 4 family.

The protein resides in the plastid. Its subcellular location is the chloroplast thylakoid membrane. It carries out the reaction a plastoquinone + NADH + (n+1) H(+)(in) = a plastoquinol + NAD(+) + n H(+)(out). It catalyses the reaction a plastoquinone + NADPH + (n+1) H(+)(in) = a plastoquinol + NADP(+) + n H(+)(out). The sequence is that of NAD(P)H-quinone oxidoreductase chain 4, chloroplastic from Aethionema grandiflorum (Persian stone-cress).